We begin with the raw amino-acid sequence, 1108 residues long: DNA-directed RNA polymerase subunit beta (1108 aa).

A disordered region spans residues 1081–1108; the sequence is SPRRTPARPTIDYSALDDTDDKEGATTF.

Belongs to the RNA polymerase beta chain family. In terms of assembly, in cyanobacteria the RNAP catalytic core is composed of 2 alpha, 1 beta, 1 beta', 1 gamma and 1 omega subunit. When a sigma factor is associated with the core the holoenzyme is formed, which can initiate transcription.

It carries out the reaction RNA(n) + a ribonucleoside 5'-triphosphate = RNA(n+1) + diphosphate. Functionally, DNA-dependent RNA polymerase catalyzes the transcription of DNA into RNA using the four ribonucleoside triphosphates as substrates. The polypeptide is DNA-directed RNA polymerase subunit beta (Thermosynechococcus vestitus (strain NIES-2133 / IAM M-273 / BP-1)).